A 375-amino-acid polypeptide reads, in one-letter code: Ribosomal RNA large subunit methyltransferase G (375 aa).

The protein belongs to the methyltransferase superfamily. RlmG family.

The protein localises to the cytoplasm. It catalyses the reaction guanosine(1835) in 23S rRNA + S-adenosyl-L-methionine = N(2)-methylguanosine(1835) in 23S rRNA + S-adenosyl-L-homocysteine + H(+). Specifically methylates the guanine in position 1835 (m2G1835) of 23S rRNA. The protein is Ribosomal RNA large subunit methyltransferase G of Stutzerimonas stutzeri (strain A1501) (Pseudomonas stutzeri).